We begin with the raw amino-acid sequence, 157 residues long: 6,7-dimethyl-8-ribityllumazine synthase (157 aa).

Residues Phe22, 57 to 59 (AYE), and 81 to 83 (TVI) contribute to the 5-amino-6-(D-ribitylamino)uracil site. (2S)-2-hydroxy-3-oxobutyl phosphate is bound at residue 86–87 (GT). His89 acts as the Proton donor in catalysis. Residue Phe114 coordinates 5-amino-6-(D-ribitylamino)uracil. Arg128 provides a ligand contact to (2S)-2-hydroxy-3-oxobutyl phosphate.

This sequence belongs to the DMRL synthase family. In terms of assembly, forms an icosahedral capsid composed of 60 subunits, arranged as a dodecamer of pentamers.

It carries out the reaction (2S)-2-hydroxy-3-oxobutyl phosphate + 5-amino-6-(D-ribitylamino)uracil = 6,7-dimethyl-8-(1-D-ribityl)lumazine + phosphate + 2 H2O + H(+). It functions in the pathway cofactor biosynthesis; riboflavin biosynthesis; riboflavin from 2-hydroxy-3-oxobutyl phosphate and 5-amino-6-(D-ribitylamino)uracil: step 1/2. Its function is as follows. Catalyzes the formation of 6,7-dimethyl-8-ribityllumazine by condensation of 5-amino-6-(D-ribitylamino)uracil with 3,4-dihydroxy-2-butanone 4-phosphate. This is the penultimate step in the biosynthesis of riboflavin. The chain is 6,7-dimethyl-8-ribityllumazine synthase from Pasteurella multocida (strain Pm70).